Reading from the N-terminus, the 305-residue chain is 4-diphosphocytidyl-2-C-methyl-D-erythritol kinase (305 aa).

Lysine 15 is an active-site residue. 99–109 (PMGGGIGGGSS) contacts ATP. The active site involves aspartate 141.

Belongs to the GHMP kinase family. IspE subfamily.

The enzyme catalyses 4-CDP-2-C-methyl-D-erythritol + ATP = 4-CDP-2-C-methyl-D-erythritol 2-phosphate + ADP + H(+). It functions in the pathway isoprenoid biosynthesis; isopentenyl diphosphate biosynthesis via DXP pathway; isopentenyl diphosphate from 1-deoxy-D-xylulose 5-phosphate: step 3/6. In terms of biological role, catalyzes the phosphorylation of the position 2 hydroxy group of 4-diphosphocytidyl-2C-methyl-D-erythritol. This is 4-diphosphocytidyl-2-C-methyl-D-erythritol kinase from Marinomonas sp. (strain MWYL1).